The following is a 506-amino-acid chain: MTVQNVRVRVAPSPTGDPHVGTAYMALFNEVFARKYNGQMILRIEDTDQTRSRDDYEANIFSALKWCGIRWDEGPDVGGAYGPYRQSERTEIYKKYAEILLQTDCAYKCFATPQELQEMRAVASTLGYRGGYDRRYRYLSPEEVRQREEQGQPYTIRLKVPLTGESVFEDQCKGRVVFPWADVDDQVLVKSDGFPTYHFANVVDDHLMGITHVLRGEEWLSSTPKHLLLYKAFGWEPPQFFHMPLLLNPDGSKLSKRKNPTSIFYYRDAGYKKEAFMNFLTLMGYSMEGDEEIYSMQRLIEAFDPKRIGRSGAVFDIRKLDWMNKHYLNHEGSPESLLQELKGWLWNDEFLLKILPLCQSRITTLADFVGLTSFFFTAIPQYSKEELLPSSLKQEQAAVMLYSLVKYLEKKDLWEKDFFYQGSKWLAEAFQVHHKKAVIPLLYVAITGAKQGLPLFDSMELLGKARTRARLTYAQNLLGGVSKKVQQQVDKALQDQPLEDIRFLDF.

The short motif at 12-22 is the 'HIGH' region element; the sequence is PSPTGDPHVGT. A 'KMSKS' region motif is present at residues 253 to 257; it reads KLSKR. Position 256 (lysine 256) interacts with ATP.

This sequence belongs to the class-I aminoacyl-tRNA synthetase family. Glutamate--tRNA ligase type 1 subfamily. Monomer.

Its subcellular location is the cytoplasm. The enzyme catalyses tRNA(Glu) + L-glutamate + ATP = L-glutamyl-tRNA(Glu) + AMP + diphosphate. Functionally, catalyzes the attachment of glutamate to tRNA(Glu) in a two-step reaction: glutamate is first activated by ATP to form Glu-AMP and then transferred to the acceptor end of tRNA(Glu). In Chlamydia trachomatis serovar L2 (strain ATCC VR-902B / DSM 19102 / 434/Bu), this protein is Glutamate--tRNA ligase.